The chain runs to 344 residues: GTP 3',8-cyclase (344 aa).

Residues 19–245 enclose the Radical SAM core domain; the sequence is PFGRAVTYLR…DIPYRTGGPA (227 aa). Arginine 28 is a GTP binding site. The [4Fe-4S] cluster site is built by cysteine 35 and cysteine 39. Tyrosine 41 is a binding site for S-adenosyl-L-methionine. Cysteine 42 provides a ligand contact to [4Fe-4S] cluster. Arginine 77 serves as a coordination point for GTP. Glycine 81 is an S-adenosyl-L-methionine binding site. Threonine 111 provides a ligand contact to GTP. Serine 135 provides a ligand contact to S-adenosyl-L-methionine. Position 171 (lysine 171) interacts with GTP. Methionine 205 serves as a coordination point for S-adenosyl-L-methionine. [4Fe-4S] cluster contacts are provided by cysteine 268 and cysteine 271. Residue 273-275 participates in GTP binding; the sequence is RVR. Cysteine 285 contacts [4Fe-4S] cluster.

Belongs to the radical SAM superfamily. MoaA family. Monomer and homodimer. It depends on [4Fe-4S] cluster as a cofactor.

It carries out the reaction GTP + AH2 + S-adenosyl-L-methionine = (8S)-3',8-cyclo-7,8-dihydroguanosine 5'-triphosphate + 5'-deoxyadenosine + L-methionine + A + H(+). Its pathway is cofactor biosynthesis; molybdopterin biosynthesis. Its function is as follows. Catalyzes the cyclization of GTP to (8S)-3',8-cyclo-7,8-dihydroguanosine 5'-triphosphate. This Brucella abortus (strain S19) protein is GTP 3',8-cyclase.